Consider the following 89-residue polypeptide: Mitochondrial import inner membrane translocase subunit Tim9 (89 aa).

At A2 the chain carries N-acetylalanine. The short motif at 28-52 is the Twin CX3C motif element; the sequence is CFLDCVKDFTTREVKPEETTCSEHC. Intrachain disulfides connect C28–C52 and C32–C48.

Belongs to the small Tim family. In terms of assembly, heterohexamer; composed of 3 copies of TIMM9 and 3 copies of TIMM10/TIM10A, named soluble 70 kDa complex. The complex forms a 6-bladed alpha-propeller structure and associates with the TIMM22 component of the TIM22 complex. Interacts with multi-pass transmembrane proteins in transit. Also forms a complex composed of TIMM9, TIMM10/TIM10A and FXC1/TIM10B. As to expression, ubiquitous, with highest expression in heart, kidney, liver and skeletal muscle.

The protein resides in the mitochondrion inner membrane. Its function is as follows. Mitochondrial intermembrane chaperone that participates in the import and insertion of multi-pass transmembrane proteins into the mitochondrial inner membrane. May also be required for the transfer of beta-barrel precursors from the TOM complex to the sorting and assembly machinery (SAM complex) of the outer membrane. Acts as a chaperone-like protein that protects the hydrophobic precursors from aggregation and guide them through the mitochondrial intermembrane space. In Homo sapiens (Human), this protein is Mitochondrial import inner membrane translocase subunit Tim9 (TIMM9).